A 130-amino-acid chain; its full sequence is uncharacterized protein (130 aa).

Helical transmembrane passes span 34–54, 73–93, and 107–127; these read AILI…FAFF, LLLT…GWLA, and FGTG…IVWI.

The protein resides in the cell membrane. This is an uncharacterized protein from Mycoplasma pneumoniae (strain ATCC 29342 / M129 / Subtype 1) (Mycoplasmoides pneumoniae).